A 61-amino-acid polypeptide reads, in one-letter code: Large ribosomal subunit protein bL28 (61 aa).

This sequence belongs to the bacterial ribosomal protein bL28 family.

The sequence is that of Large ribosomal subunit protein bL28 from Geobacillus thermodenitrificans (strain NG80-2).